Consider the following 210-residue polypeptide: Small ribosomal subunit protein uS4 (210 aa).

The region spanning 99-170 (RRLDNAVFRA…NLEAVVRRGV (72 aa)) is the S4 RNA-binding domain.

This sequence belongs to the universal ribosomal protein uS4 family. In terms of assembly, part of the 30S ribosomal subunit. Contacts protein S5. The interaction surface between S4 and S5 is involved in control of translational fidelity.

One of the primary rRNA binding proteins, it binds directly to 16S rRNA where it nucleates assembly of the body of the 30S subunit. In terms of biological role, with S5 and S12 plays an important role in translational accuracy. In Desulfotalea psychrophila (strain LSv54 / DSM 12343), this protein is Small ribosomal subunit protein uS4.